An 844-amino-acid chain; its full sequence is DNA mismatch repair protein MutS (844 aa).

ATP is bound at residue 610-617 (GPNMGGKS).

Belongs to the DNA mismatch repair MutS family.

Functionally, this protein is involved in the repair of mismatches in DNA. It is possible that it carries out the mismatch recognition step. This protein has a weak ATPase activity. The protein is DNA mismatch repair protein MutS of Francisella tularensis subsp. novicida (strain U112).